A 374-amino-acid polypeptide reads, in one-letter code: Alanine racemase (374 aa).

The active-site Proton acceptor; specific for D-alanine is Lys35. Lys35 bears the N6-(pyridoxal phosphate)lysine mark. Arg130 provides a ligand contact to substrate. The active-site Proton acceptor; specific for L-alanine is Tyr253. Met305 lines the substrate pocket.

It belongs to the alanine racemase family. Pyridoxal 5'-phosphate serves as cofactor.

It carries out the reaction L-alanine = D-alanine. The protein operates within amino-acid biosynthesis; D-alanine biosynthesis; D-alanine from L-alanine: step 1/1. Its function is as follows. Catalyzes the interconversion of L-alanine and D-alanine. May also act on other amino acids. In Ralstonia pickettii (strain 12J), this protein is Alanine racemase (alr).